The chain runs to 468 residues: 55 kDa erythrocyte membrane protein (468 aa).

The PDZ domain occupies 73–154 (LVQFEKVTEE…MVSIKVIPNQ (82 aa)). Residues 160-230 (ALQMFMRAQF…PSPELQEWRV (71 aa)) form the SH3 domain. One can recognise a Guanylate kinase-like domain in the interval 284–453 (RKTLVLIGAS…SLKLLEEAFE (170 aa)).

It belongs to the MAGUK family.

The protein localises to the membrane. It localises to the cell projection. Its subcellular location is the stereocilium. Its function is as follows. May play a role in the regulation of neutrophil polarization. This chain is 55 kDa erythrocyte membrane protein (MPP1), found in Gallus gallus (Chicken).